A 529-amino-acid polypeptide reads, in one-letter code: ATP synthase subunit alpha (529 aa).

An ATP-binding site is contributed by 173 to 180; the sequence is GDRQTGKT.

Belongs to the ATPase alpha/beta chains family. F-type ATPases have 2 components, CF(1) - the catalytic core - and CF(0) - the membrane proton channel. CF(1) has five subunits: alpha(3), beta(3), gamma(1), delta(1), epsilon(1). CF(0) has three main subunits: a(1), b(2) and c(9-12). The alpha and beta chains form an alternating ring which encloses part of the gamma chain. CF(1) is attached to CF(0) by a central stalk formed by the gamma and epsilon chains, while a peripheral stalk is formed by the delta and b chains.

It localises to the cell membrane. The enzyme catalyses ATP + H2O + 4 H(+)(in) = ADP + phosphate + 5 H(+)(out). Functionally, produces ATP from ADP in the presence of a proton gradient across the membrane. The alpha chain is a regulatory subunit. The protein is ATP synthase subunit alpha of Streptomyces avermitilis (strain ATCC 31267 / DSM 46492 / JCM 5070 / NBRC 14893 / NCIMB 12804 / NRRL 8165 / MA-4680).